Consider the following 122-residue polypeptide: Cytochrome c3 hydrogenase large chain (122 aa).

Requires Fe cation as cofactor.

It carries out the reaction 2 Fe(III)-[cytochrome c3] + H2 = 2 Fe(II)-[cytochrome c3] + 2 H(+). This Acidithiobacillus ferrooxidans (Thiobacillus ferrooxidans) protein is Cytochrome c3 hydrogenase large chain (hoxG).